An 801-amino-acid polypeptide reads, in one-letter code: Triacylglycerol lipase SDP1L (801 aa).

N-linked (GlcNAc...) asparagine glycosylation occurs at Asn-130. The next 2 membrane-spanning stretches (helical) occupy residues 232–249 (ALLL…LGVV) and 261–277 (IIAG…VVGT). The 204-residue stretch at 233-436 (LLLSGGASLG…EMDLPMIQLK (204 aa)) folds into the PNPLA domain. Positions 264–268 (GSSVG) match the GXSXG motif. The active-site Nucleophile is Ser-266. Asn-328 and Asn-332 each carry an N-linked (GlcNAc...) asparagine glycan. Asp-423 functions as the Proton acceptor in the catalytic mechanism. Asn-605, Asn-620, Asn-649, Asn-653, Asn-708, and Asn-759 each carry an N-linked (GlcNAc...) asparagine glycan. Positions 648–675 (SNRTSNLSHTYDAGSECDSPEAEDWTRS) are disordered. The tract at residues 750 to 801 (MNSEPEDSQNESEIPETPESVQLDSPEKDIIDGESSASEDGDAQANLIHDHE) is disordered. Acidic residues predominate over residues 753 to 765 (EPEDSQNESEIPE).

Highly expressed in mature pollen.

The protein resides in the lipid droplet. Its subcellular location is the membrane. It catalyses the reaction a triacylglycerol + H2O = a diacylglycerol + a fatty acid + H(+). Its function is as follows. May be involved in the release of fatty acids from the oil body in germinating seedlings. Can hydrolyze triacylglycerols in vitro. This chain is Triacylglycerol lipase SDP1L, found in Arabidopsis thaliana (Mouse-ear cress).